The sequence spans 93 residues: Beta-defensin 128 (93 aa).

A signal peptide spans 1-18 (MKLFLVLIILLFEVLTDG). 3 disulfides stabilise this stretch: Cys24/Cys52, Cys32/Cys46, and Cys36/Cys53.

Belongs to the beta-defensin family.

The protein localises to the secreted. Functionally, has antibacterial activity. The protein is Beta-defensin 128 (DEFB128) of Homo sapiens (Human).